Reading from the N-terminus, the 255-residue chain is 3-dehydroquinate dehydratase (255 aa).

3-dehydroquinate is bound by residues 47–49 (EWR) and R83. H144 (proton donor/acceptor) is an active-site residue. K171 (schiff-base intermediate with substrate) is an active-site residue. 3-dehydroquinate contacts are provided by R214, S233, and Q237.

This sequence belongs to the type-I 3-dehydroquinase family. In terms of assembly, homodimer or homotetramer.

It carries out the reaction 3-dehydroquinate = 3-dehydroshikimate + H2O. It functions in the pathway metabolic intermediate biosynthesis; chorismate biosynthesis; chorismate from D-erythrose 4-phosphate and phosphoenolpyruvate: step 3/7. Involved in the third step of the chorismate pathway, which leads to the biosynthesis of aromatic amino acids. Catalyzes the cis-dehydration of 3-dehydroquinate (DHQ) and introduces the first double bond of the aromatic ring to yield 3-dehydroshikimate. The reaction involves the formation of an imine intermediate between the keto group of 3-dehydroquinate and the epsilon-amino group of Lys-170 at the active site. This chain is 3-dehydroquinate dehydratase, found in Clostridioides difficile (strain 630) (Peptoclostridium difficile).